The sequence spans 462 residues: Glycine--tRNA ligase (462 aa).

R99 and E174 together coordinate substrate. Residues 206-208, 216-221, 290-291, and 334-337 contribute to the ATP site; these read RNE, FRTREF, EL, and GADR. Residue 221–225 coordinates substrate; that stretch reads FEQME. Residue 330-334 coordinates substrate; that stretch reads EPSLG.

It belongs to the class-II aminoacyl-tRNA synthetase family. In terms of assembly, homodimer.

Its subcellular location is the cytoplasm. It carries out the reaction tRNA(Gly) + glycine + ATP = glycyl-tRNA(Gly) + AMP + diphosphate. Catalyzes the attachment of glycine to tRNA(Gly). This Macrococcus caseolyticus (strain JCSC5402) (Macrococcoides caseolyticum) protein is Glycine--tRNA ligase.